Consider the following 990-residue polypeptide: Transposase for transposon Tn3926 (990 aa).

Residues 673–698 are disordered; it reads GDGTTSSSDGQNFRTGSKAESTGHIN. Positions 674 to 696 are enriched in polar residues; sequence DGTTSSSDGQNFRTGSKAESTGH.

This sequence belongs to the transposase 7 family.

In terms of biological role, required for transposition of transposon Tn3926. This is Transposase for transposon Tn3926 (tnpA) from Escherichia coli.